We begin with the raw amino-acid sequence, 476 residues long: Argininosuccinate lyase (476 aa).

It belongs to the lyase 1 family. Argininosuccinate lyase subfamily.

It is found in the cytoplasm. The catalysed reaction is 2-(N(omega)-L-arginino)succinate = fumarate + L-arginine. It functions in the pathway amino-acid biosynthesis; L-arginine biosynthesis; L-arginine from L-ornithine and carbamoyl phosphate: step 3/3. The chain is Argininosuccinate lyase from Acaryochloris marina (strain MBIC 11017).